Reading from the N-terminus, the 392-residue chain is 3-ketoacyl-CoA thiolase (392 aa).

Catalysis depends on cysteine 95, which acts as the Acyl-thioester intermediate. Active-site proton acceptor residues include histidine 347 and cysteine 377.

Belongs to the thiolase-like superfamily. Thiolase family. Heterotetramer of two alpha chains (FadB) and two beta chains (FadA).

The protein resides in the cytoplasm. The enzyme catalyses an acyl-CoA + acetyl-CoA = a 3-oxoacyl-CoA + CoA. The protein operates within lipid metabolism; fatty acid beta-oxidation. Catalyzes the final step of fatty acid oxidation in which acetyl-CoA is released and the CoA ester of a fatty acid two carbons shorter is formed. The polypeptide is 3-ketoacyl-CoA thiolase (Chromohalobacter salexigens (strain ATCC BAA-138 / DSM 3043 / CIP 106854 / NCIMB 13768 / 1H11)).